Consider the following 377-residue polypeptide: Ribosomal RNA large subunit methyltransferase G (377 aa).

Belongs to the methyltransferase superfamily. RlmG family.

It localises to the cytoplasm. The enzyme catalyses guanosine(1835) in 23S rRNA + S-adenosyl-L-methionine = N(2)-methylguanosine(1835) in 23S rRNA + S-adenosyl-L-homocysteine + H(+). Functionally, specifically methylates the guanine in position 1835 (m2G1835) of 23S rRNA. The sequence is that of Ribosomal RNA large subunit methyltransferase G from Shewanella sp. (strain MR-4).